We begin with the raw amino-acid sequence, 166 residues long: Co-chaperone protein HscB homolog (166 aa).

A J domain is found at 3–75 (QYFTLFRIEP…IDRAAYLLKT (73 aa)).

The protein belongs to the HscB family. In terms of assembly, interacts with HscA and stimulates its ATPase activity.

In terms of biological role, co-chaperone involved in the maturation of iron-sulfur cluster-containing proteins. Seems to help targeting proteins to be folded toward HscA. The protein is Co-chaperone protein HscB homolog of Neisseria gonorrhoeae (strain NCCP11945).